A 636-amino-acid chain; its full sequence is Plasma kallikrein (636 aa).

The signal sequence occupies residues 1–19 (MIALRQAAYFICLFATVSC). Apple domains are found at residues 21 to 104 (CLTQ…LKRC), 111 to 194 (CHRS…LKAC), 201 to 284 (CRVD…LLTC), and 294 to 377 (CHSK…LRLC). 12 disulfides stabilise this stretch: C21–C104, C47–C77, C51–C57, C111–C194, C137–C166, C141–C147, C201–C284, C227–C256, C231–C237, C294–C377, C320–C349, and C324–C330. Residues N66 and N127 are each glycosylated (N-linked (GlcNAc...) asparagine). N361 and N397 each carry an N-linked (GlcNAc...) asparagine glycan. A Peptidase S1 domain is found at 392–627 (IVGGTNASWG…YVDWILEKTQ (236 aa)). C420 and C436 are disulfide-bonded. The active-site Charge relay system is the H435. A glycan (N-linked (GlcNAc...) asparagine) is linked at N454. The active-site Charge relay system is D484. N495 is a glycosylation site (N-linked (GlcNAc...) asparagine). Cystine bridges form between C518-C585, C549-C564, and C575-C603. S579 (charge relay system) is an active-site residue.

This sequence belongs to the peptidase S1 family. Plasma kallikrein subfamily. As to quaternary structure, forms a heterodimer with SERPINA5. The zymogen is activated by factor XIIa, which cleaves the molecule into a light chain, which contains the active site, and a heavy chain, which associates with HMW kininogen. These chains are linked by one or more disulfide bonds.

The protein resides in the secreted. It catalyses the reaction Cleaves selectively Arg-|-Xaa and Lys-|-Xaa bonds, including Lys-|-Arg and Arg-|-Ser bonds in (human) kininogen to release bradykinin.. With respect to regulation, inhibited by SERPINA5. Functionally, the enzyme cleaves Lys-Arg and Arg-Ser bonds. It activates, in a reciprocal reaction, factor XII after its binding to a negatively charged surface. It also releases bradykinin from HMW kininogen and may also play a role in the renin-angiotensin system by converting prorenin into renin. This is Plasma kallikrein (KLKB1) from Bos taurus (Bovine).